The primary structure comprises 1139 residues: Solute carrier family 12 member 5 (1139 aa).

2 disordered regions span residues 1 to 63 (MSRR…GKEY) and 92 to 116 (TNLPQGSREHEEAENNEGGKKKPVQ). The Cytoplasmic segment spans residues 1–98 (MSRRFTVTSL…ANYTNLPQGS (98 aa)). The span at 19 to 45 (PDPESRRHSVADPRHLPGEDVKGDGNP) shows a compositional bias: basic and acidic residues. Residues 46–55 (KESSPFINST) are compositionally biased toward polar residues. Residue T57 is modified to Phosphothreonine. The segment covering 98-111 (SREHEEAENNEGGK) has biased composition (basic and acidic residues). A discontinuously helical membrane pass occupies residues 99–120 (REHEEAENNEGGKKKPVQAPRM). K113 is a K(+) binding site. Residues 121-129 (GTFMGVYLP) are Extracellular-facing. Residues 130-151 (CLQNIFGVILFLRLTWVVGIAG) traverse the membrane as a helical segment. Residues 152 to 174 (IMESFCMVFICCSCTMLTAISMS) are Cytoplasmic-facing. Residues 175-203 (AIATNGVVPAGGSYYMISRSLGPEFGGAV) traverse the membrane as a helical segment. Residue A184 coordinates chloride. Residues 204-229 (GLCFYLGTTFAGAMYILGTIEILLAY) lie on the Extracellular side of the membrane. A run of 2 helical transmembrane segments spans residues 230–250 (LFPAMAIFKAEDASGEAAAML) and 251–276 (NNMRVYGTCVLTCMATVVFVGVKYVN). At 277–402 (KFALVFLGCV…ERSGMTSVGL (126 aa)) the chain is on the extracellular side. The cysteines at positions 310 and 325 are disulfide-linked. 4 N-linked (GlcNAc...) asparagine glycosylation sites follow: N314, N333, N351, and N362. A disulfide bond links C345 and C354. The helical transmembrane segment at 403–420 (ADGTPIDMDHPYVFSDMT) threads the bilayer. M410 contributes to the K(+) binding site. Chloride-binding residues include Y414 and V415. Residues 421–429 (SYFTLLVGI) lie on the Cytoplasmic side of the membrane. A helical membrane pass occupies residues 430–453 (YFPSVTGIMAGSNRSGDLRDAQKS). Position 446 (D446) interacts with K(+). Over 454 to 485 (IPTGTILAIATTSAVYISSVVLFGACIEGVVL) the chain is Extracellular. A helical transmembrane segment spans residues 486–513 (RDKFGEAVNGNLVVGTLAWPSPWVIVIG). At 514–534 (SFFSTCGAGLQSLTGAPRLLQ) the chain is on the cytoplasmic side. Helical transmembrane passes span 535-555 (AISRDGIVPFLQVFGHGKANG) and 556-578 (EPTWALLLTACICEIGILIASLD). A chloride-binding site is contributed by E569. Residues 579–592 (EVAPILSMFFLMCY) lie on the Cytoplasmic side of the membrane. A run of 2 helical transmembrane segments spans residues 593-615 (MFVNLACAVQTLLRTPNWRPRFR) and 616-632 (YYHWTLSFLGMSLCLAL). Residues 633–1139 (MFICSWYYAL…GGREVITIYS (507 aa)) lie on the Cytoplasmic side of the membrane. Residues 667–681 (GIRGLSLSAARYALL) are scissor helix. T929 is modified (phosphothreonine; by OXSR1 and STK39). Positions 942-1052 (MHLTKNERER…GPSPVSSEGI (111 aa)) are disordered. The span at 945 to 962 (TKNEREREIQSITDESRG) shows a compositional bias: basic and acidic residues. The span at 982 to 994 (TAGDSEEKPEEEV) shows a compositional bias: acidic residues. The segment covering 1003–1012 (PSCPSSSPSP) has biased composition (low complexity). Residues 1023 to 1042 (DPEKVHLTWTKDKSVAEKNK) show a composition bias toward basic and acidic residues. A Phosphothreonine; by OXSR1 and STK39 modification is found at T1030. Phosphoserine occurs at positions 1045, 1048, and 1049.

This sequence belongs to the SLC12A transporter family. K/Cl co-transporter subfamily. As to quaternary structure, homodimer; adopts a domain-swap conformation at the scissor helices connecting the transmembrane domain and C-terminal domain. Heterodimer with K-Cl cotransporters SLC12A6 and SLC12A7. Interacts with AP2A1. In terms of processing, phosphorylated at Thr-929 and Thr-1030 by OXSR1/OSR1 and STK39/SPAK downstream of WNK kinases (WNK1, WNK2, WNK3 or WNK4), inhibiting the potassium-chloride cotransport activity. As to expression, brain specific. Detected in neuronal cells.

Its subcellular location is the cell membrane. The protein localises to the cell projection. The protein resides in the dendrite. The enzyme catalyses K(+)(in) + chloride(in) = K(+)(out) + chloride(out). Its activity is regulated as follows. Inhibited following phosphorylation by OXSR1/OSR1 and STK39/SPAK: phosphorylation takes place downstream of WNK kinases (WNK1, WNK2, WNK3 or WNK4) in response to hyperosmotic stress and subsequent cell shrinkage. In terms of biological role, mediates electroneutral potassium-chloride cotransport in mature neurons and is required for neuronal Cl(-) homeostasis. As major extruder of intracellular chloride, it establishes the low neuronal Cl(-) levels required for chloride influx after binding of GABA-A and glycine to their receptors, with subsequent hyperpolarization and neuronal inhibition. Involved in the regulation of dendritic spine formation and maturation. This chain is Solute carrier family 12 member 5, found in Homo sapiens (Human).